We begin with the raw amino-acid sequence, 171 residues long: S-ribosylhomocysteine lyase (171 aa).

Fe cation contacts are provided by His-54, His-58, and Cys-128.

This sequence belongs to the LuxS family. Homodimer. Fe cation is required as a cofactor.

It carries out the reaction S-(5-deoxy-D-ribos-5-yl)-L-homocysteine = (S)-4,5-dihydroxypentane-2,3-dione + L-homocysteine. Involved in the synthesis of autoinducer 2 (AI-2) which is secreted by bacteria and is used to communicate both the cell density and the metabolic potential of the environment. The regulation of gene expression in response to changes in cell density is called quorum sensing. Catalyzes the transformation of S-ribosylhomocysteine (RHC) to homocysteine (HC) and 4,5-dihydroxy-2,3-pentadione (DPD). This is S-ribosylhomocysteine lyase from Pectobacterium carotovorum subsp. carotovorum (strain PC1).